The primary structure comprises 270 residues: MSDESRPSPAETPATTFAETSAETSAAGRSPARTAAVIPAAGRGVRLGPGAPKALRALGGTPMLIHAVRAMAASRAVSLVVVVAPPDGAGEVKSLLDAHALPERTDFVVVPGGETRQESVRLGLDALPPEYGIVLVHDAARPLVPVDTVDAVIDAVREGAPAVVPAVPLADTVKQVEPAAAPGEPEPVVATPERARLRAVQTPQGFDRATLVRAHGTVTDDVTDDASMVEQLGLAVVVVPGHEEAFKVTRPLDLVLAEAVLARRRLNDGF.

Residues 1–33 (MSDESRPSPAETPATTFAETSAETSAAGRSPAR) are disordered. Residues 7-27 (PSPAETPATTFAETSAETSAA) show a composition bias toward low complexity.

The protein belongs to the IspD/TarI cytidylyltransferase family. IspD subfamily.

The catalysed reaction is 2-C-methyl-D-erythritol 4-phosphate + CTP + H(+) = 4-CDP-2-C-methyl-D-erythritol + diphosphate. The protein operates within isoprenoid biosynthesis; isopentenyl diphosphate biosynthesis via DXP pathway; isopentenyl diphosphate from 1-deoxy-D-xylulose 5-phosphate: step 2/6. Its function is as follows. Catalyzes the formation of 4-diphosphocytidyl-2-C-methyl-D-erythritol from CTP and 2-C-methyl-D-erythritol 4-phosphate (MEP). This Streptomyces coelicolor (strain ATCC BAA-471 / A3(2) / M145) protein is 2-C-methyl-D-erythritol 4-phosphate cytidylyltransferase.